The sequence spans 184 residues: uncharacterized protein (184 aa).

Belongs to the PhzF family.

The protein localises to the cytoplasm. The protein resides in the nucleus. This is an uncharacterized protein from Schizosaccharomyces pombe (strain 972 / ATCC 24843) (Fission yeast).